Consider the following 206-residue polypeptide: Smr domain-containing protein C11H11.03c (206 aa).

Residues 75–150 (IDLHGLYIDE…NEGRIYVYLP (76 aa)) form the Smr domain.

The protein resides in the cytoplasm. It is found in the nucleus. In Schizosaccharomyces pombe (strain 972 / ATCC 24843) (Fission yeast), this protein is Smr domain-containing protein C11H11.03c.